Reading from the N-terminus, the 542-residue chain is Cytochrome P450 monooxygenase TRI1 (542 aa).

The helical transmembrane segment at 37–54 threads the bilayer; it reads LIYFLCFVVLGRAVQWFL. Residues Asn-167, Asn-297, and Asn-428 are each glycosylated (N-linked (GlcNAc...) asparagine). Cys-469 contributes to the heme binding site.

It belongs to the cytochrome P450 family. Heme is required as a cofactor.

The protein localises to the membrane. The protein operates within sesquiterpene biosynthesis; trichothecene biosynthesis. Cytochrome P450 monooxygenase; part of 2-gene cluster involved in trichothecene C-8 modification that mediates the biosynthesis of T2-toxin. The biosynthesis of trichothecenes begins with the cyclization of farnesyl diphosphate to trichodiene and is catalyzed by the trichodiene synthase TRI5. Trichodiene undergoes a series of oxygenations catalyzed by the cytochrome P450 monooxygenase TRI4. TRI4 controls the addition of four oxygens at C-2, C-3, C-11, and the C-12, C-13-epoxide to form the intermediate isotrichotriol. Isotrichotriol then undergoes a non-enzymatic isomerization and cyclization to form isotrichodermol. During this process, the oxygen at the C-2 position becomes the pyran ring oxygen and the hydroxyl group at C-11 is lost. More complex type A trichothecenes are built by modifying isotrichodermol through a series of paired hydroxylation and acetylation or acylation steps. Isotrichodermol is converted to isotrichodermin by the acetyltransferase TRI101. TRI101 encodes a C-3 transacetylase that acts as a self-protection or resistance factor during biosynthesis and that the presence of a free C-3 hydroxyl group is a key component of Fusarium trichothecene phytotoxicity. A second hydroxyl group is added to C-15 by the trichothecene C-15 hydroxylase TRI11, producing 15-decalonectrin, which is then acetylated by TRI3, producing calonectrin. A third hydroxyl group is added at C-4 by the cytochrome P450 monooxygenase TRI13, converting calonectrin to 3,15-diacetoxyspirpenol, which is subsequently acetylated by the acetyltransferase TRI7. A fourth hydroxyl group is added to C-8 by the cytochrome P450 monooxygenase TRI1, followed by the addition of an isovaleryl moiety by TRI16. Finally, the acetyl group is removed from the C-3 position by the trichothecene C-3 esterase TRI8 to produce T-2 toxin. In Fusarium sporotrichioides, this protein is Cytochrome P450 monooxygenase TRI1.